Consider the following 376-residue polypeptide: Cytochrome b (376 aa).

The next 4 membrane-spanning stretches (helical) occupy residues 28–48 (YGFLLGIIFFIQIITGVFLAS), 72–94 (WCFRYMHATGASLVFLLTYLHIL), 107–127 (SWISGLILFMIFIVTAFVGYV), and 169–189 (FFVLHFILPFIGLCIVFIHIF). Heme b is bound by residues His78 and His92. Residues His173 and His187 each coordinate heme b. His192 provides a ligand contact to a ubiquinone. 4 helical membrane-spanning segments follow: residues 214-234 (LLSLDVKGFNNVIILFLIQSL), 274-294 (VPSKPAGLVIVLLSLQLLFLL), 317-337 (VPIIWFMCAFYALLWIGCQLP), and 340-360 (IFILYGRLFIVLFFCSGLFVL).

The protein belongs to the cytochrome b family. The main subunits of complex b-c1 are: cytochrome b, cytochrome c1 and the Rieske protein. Heme b serves as cofactor.

It is found in the mitochondrion inner membrane. In terms of biological role, component of the ubiquinol-cytochrome c reductase complex (complex III or cytochrome b-c1 complex) that is part of the mitochondrial respiratory chain. The b-c1 complex mediates electron transfer from ubiquinol to cytochrome c. Contributes to the generation of a proton gradient across the mitochondrial membrane that is then used for ATP synthesis. The protein is Cytochrome b (MT-CYB) of Plasmodium falciparum.